The following is a 1288-amino-acid chain: MADPAAPAPAQAQAAAAPTPAAAPAAAAPPPAPATDSASGPSSDSGPEAGSQRLLFSHDLVSGRYRGSVHFGLVRLIHGEDSDSEGDDDGRGSSGCSEAGGAGHEEGRASPLRRGYVRVQWYPEGVKQHVKETKLKLEDRSVVPRDVVRHMRSTDSQCGTVIDVNIDCAVKLIGTNCIIYPVNSKDLQHIWPFMYGDYIAYDCWLGKVYDLKNQIILKLSNGARCSMNTEDGAKLYDVCPHVSDSGLFFDDSYGFYPGQVLIGPAKIFSSVQWLSGVKPVLSTKSKFRVVVEEVQVVELKVTWITKSFCPGGTDSVSPPPSIITQENLGRVKRLGCFDHAQRQLGERCLYVFPAKVEPAKIAWECPEKNCAQGEGSMAKKVKRLLKKQVVRIMSCTPDTQCPRDHSMEDPDKKGEARAGSEIGSASPEEQPDGSASPVEMQDEGSEELQETCEPLPPFLLKEGGDDGLHSAEQDADDEAADDTDDTSSVTSSASSTTSSQSGSGTGRKKSIPLSIKNLKRKHKRKKNKVTRDFKPGDRVAVEVVTTMTSADVMWQDGSVECNIRSNDLFPVHHLDNNEFCPGDFVVDKRVQSCPDPAVYGVVQSGDHVGRTCMVKWFKLRPSGDDVELIGEEEDVSVYDIADHPDFRFRTTDIVIRIGNTEDGALPKEDEPSVGQVARVDVSSKVEVVWADNSKTIILPQHLYNIESEIEESDYDSVEGSSSGASSDEWEDDSDSWETDNGLVDDEHPKIEELAAILPAEQPTAPEEDKGVVISEEAATAAIQGAVAMAAPVAGLMEKAGKDGPPKSFRELKEAIKILESLKNMTVEQLLTGSPTSPTVEPEKPTREKKFLDDIKKLQENLKKTLDNVAIAEEEKMEAVPDTERKEEKPEVQSPVKAEWPSETPVLCQQCGGRPGVTFTSAKGEVFSVLEFAPSNHSFKKIEFQPPEAKKFFSTVRKEMALLATSLPDGIMVKTFEDRMDLFSALIKGPTRTPYEDGLYLFDIQLPNIYPAVPPHFCYLSQCSGRLNPNLYDNGKVCVSLLGTWIGKGTERWTSKSSLLQVLISIQGLILVNEPYYNEAGFDSDRGLQEGYENSRCYNEMALIRVVQSMTQLVRRPPEVFEQEIRQHFSVGGWRLVNRIESWLETHAMQERAQVMPNGALKDSSSLEPMAAAELSDSGREEPEDVGMAPGEASQGSDSEGGAQGPASASRDHTEQTETAPDASAPPSVRPKRRRKSYRSFLPEKSGYPDIGFPLFPLSKGFIKSIRGVLTQFRAALLEAGMPESTEDK.

Low complexity-rich tracts occupy residues Met-1–Ala-26 and Ala-34–Pro-47. Disordered regions lie at residues Met-1–Ser-51 and Glu-80–Ala-109. 4 positions are modified to phosphoserine: Ser-45, Ser-82, Ser-84, and Ser-394. Disordered regions lie at residues Thr-396–Val-529 and Glu-711–Val-743. The span at Cys-401–Ala-418 shows a compositional bias: basic and acidic residues. A Phosphoserine modification is found at Ser-436. Residues Met-440–Glu-450 are compositionally biased toward acidic residues. A compositionally biased stretch (basic and acidic residues) spans Glu-462–Glu-472. Residues Gln-473–Asp-485 show a composition bias toward acidic residues. Thr-483 and Thr-486 each carry phosphothreonine. The segment covering Thr-486–Gly-502 has biased composition (low complexity). Ser-510 is subject to Phosphoserine. Residues Asn-517–Lys-528 show a composition bias toward basic residues. A compositionally biased stretch (low complexity) spans Val-717–Ser-726. Over residues Asp-727–Glu-737 the composition is skewed to acidic residues. Positions Arg-809 to Val-879 form a coiled coil. A Phosphoserine modification is found at Ser-833. Thr-835 is subject to Phosphothreonine. Ser-836 carries the post-translational modification Phosphoserine. Basic and acidic residues predominate over residues Glu-872–Glu-890. The tract at residues Glu-872 to Trp-899 is disordered. Ser-893 carries the phosphoserine modification. Residues Lys-950 to Thr-1110 enclose the UBC core domain. The Glycyl thioester intermediate role is filled by Cys-1037. The tract at residues Gly-1158 to Tyr-1247 is disordered.

Belongs to the ubiquitin-conjugating enzyme family. As to quaternary structure, interacts with CPNE1 (via VWFA domain) and CPNE4 (via VWFA domain). Interacts with UBR2. Phosphorylated. Phosphorylation affects subcellular location. In terms of processing, ubiquitinated: autoubiquitinates, possibly affecting its subcellular location. In terms of tissue distribution, highly expressed in reticulocytes.

It localises to the cytoplasm. The protein resides in the nucleus. It carries out the reaction S-ubiquitinyl-[E1 ubiquitin-activating enzyme]-L-cysteine + [acceptor protein]-L-lysine = [E1 ubiquitin-activating enzyme]-L-cysteine + N(6)-monoubiquitinyl-[acceptor protein]-L-lysine.. It participates in protein modification; protein ubiquitination. Its activity is regulated as follows. Inhibited by inorganic arsenite such as phenylarsenoxides. In terms of biological role, E2/E3 hybrid ubiquitin-protein ligase that displays both E2 and E3 ligase activities and mediates monoubiquitination of target proteins. Negatively regulates TRAF6-mediated NF-kappa-B activation independently of its E2 activity. Acts as a positive regulator of BMP7 signaling by mediating monoubiquitination of SMAD6, thereby regulating adipogenesis. Mediates monoubiquitination at different sites of the nuclear localization signal (NLS) of BAP1, leading to cytoplasmic retention of BAP1. Also able to monoubiquitinate the NLS of other chromatin-associated proteins, such as INO80 and CXXC1, affecting their subcellular location. Acts as a regulator of retrograde transport by assisting the TRIM27:MAGEL2 E3 ubiquitin ligase complex to mediate 'Lys-63'-linked ubiquitination of WASHC1, leading to promote endosomal F-actin assembly. The polypeptide is (E3-independent) E2 ubiquitin-conjugating enzyme UBE2O (Ube2o) (Mus musculus (Mouse)).